Here is a 659-residue protein sequence, read N- to C-terminus: Threonine--tRNA ligase (659 aa).

In terms of domain architecture, TGS spans 3–64 (EKIRITLIDN…LEDGRLEIIT (62 aa)). The interval 249–555 (DHRRLGQEMD…LIEHHAGRFP (307 aa)) is catalytic. Zn(2+) contacts are provided by cysteine 354, histidine 405, and histidine 532.

This sequence belongs to the class-II aminoacyl-tRNA synthetase family. In terms of assembly, homodimer. It depends on Zn(2+) as a cofactor.

The protein resides in the cytoplasm. The enzyme catalyses tRNA(Thr) + L-threonine + ATP = L-threonyl-tRNA(Thr) + AMP + diphosphate + H(+). Its function is as follows. Catalyzes the attachment of threonine to tRNA(Thr) in a two-step reaction: L-threonine is first activated by ATP to form Thr-AMP and then transferred to the acceptor end of tRNA(Thr). Also edits incorrectly charged L-seryl-tRNA(Thr). In Zymomonas mobilis subsp. mobilis (strain ATCC 31821 / ZM4 / CP4), this protein is Threonine--tRNA ligase.